A 593-amino-acid polypeptide reads, in one-letter code: MSNNNGLIIGIDLGTTNSCVSVMEGAQKVVIENPEGKRTTPSVVSYKNGEIIVGDAAKRQMLTNPNTIVSIKRLMGTSKKVKINDKGVEKELTPEEVSASILSYLKDYAEKKTGQKISRAVITVPAYFNDAERQATKTAGKIAGLTVERIINEPTAAALAYGIDKGHREMKVLVYDLGGGTFDVSLLDIADGTFEVMATAGDNRLGGDDWDNKIIEWIIAEIKKDHPSLDLKSDKMAMQRLKEAAERAKIELSAQLETLISLPFIAVTPEGPVNAELTLSRAKFEELTKDLLERTRNPIADVLKEAKVDPSQVDEILLVGGSTRMPAVQKLVESMIPNKAPNRTINPDEVVAIGAAVQGGVLRGDVKDILLLDVTPLTLAIETLGGVATPIIKRNTTIPVSKSQIFSTAQDNQESVDVSIYQGERPMARENKSLGTFSLGGIQPAPKGKPQIEITFNIDANGILNVKAKDLTTGKENSITISNSSELDENEIQRMIRDAEANKERDAIVKQRIEMRYEGEGIVNTINEILGSKEAEALPAQEKASLTKIVDGINGALKAEKWDELKEQIDGFKKWRDDMSKKYGGGEAPAEPK.

Position 181 is a phosphothreonine; by autocatalysis (Thr-181).

Belongs to the heat shock protein 70 family.

In terms of biological role, acts as a chaperone. This chain is Chaperone protein DnaK, found in Mycoplasmoides gallisepticum (strain R(low / passage 15 / clone 2)) (Mycoplasma gallisepticum).